The chain runs to 293 residues: ATP synthase gamma chain (293 aa).

Belongs to the ATPase gamma chain family. As to quaternary structure, F-type ATPases have 2 components, CF(1) - the catalytic core - and CF(0) - the membrane proton channel. CF(1) has five subunits: alpha(3), beta(3), gamma(1), delta(1), epsilon(1). CF(0) has three main subunits: a, b and c.

The protein localises to the cell membrane. Functionally, produces ATP from ADP in the presence of a proton gradient across the membrane. The gamma chain is believed to be important in regulating ATPase activity and the flow of protons through the CF(0) complex. The polypeptide is ATP synthase gamma chain (Streptococcus agalactiae serotype III (strain NEM316)).